The sequence spans 831 residues: DNA polymerase I, thermostable (831 aa).

The 5'-3' exonuclease domain maps to 174-258 (RPEQWVDYRA…TDLPLEVDFG (85 aa)). The interval 409 to 831 (ERLFQTLKER…LGEDWLSAKE (423 aa)) is polymerase.

It belongs to the DNA polymerase type-A family.

The enzyme catalyses DNA(n) + a 2'-deoxyribonucleoside 5'-triphosphate = DNA(n+1) + diphosphate. Functionally, in addition to polymerase activity, this DNA polymerase exhibits 5'-3' exonuclease activity. The sequence is that of DNA polymerase I, thermostable (polA) from Thermus thermophilus.